A 182-amino-acid polypeptide reads, in one-letter code: Regulatory protein RecX (182 aa).

Residues 12-54 (LSQRDHSESELRRKLAAPPFSAKGNWGKRSGAKSSNLVESNPV) are disordered. The span at 13–24 (SQRDHSESELRR) shows a compositional bias: basic and acidic residues. The segment covering 43 to 54 (AKSSNLVESNPV) has biased composition (polar residues).

It belongs to the RecX family.

The protein localises to the cytoplasm. Functionally, modulates RecA activity. This chain is Regulatory protein RecX, found in Yersinia pseudotuberculosis serotype I (strain IP32953).